A 481-amino-acid chain; its full sequence is uncharacterized protein (481 aa).

11 consecutive transmembrane segments (helical) span residues 14–34, 46–66, 90–110, 134–154, 167–187, 218–238, 258–278, 303–323, 377–397, 411–431, and 446–466; these read LGFCSVVMLGINSIIGAGIFL, FAPMAYVLAGIFAGVVAIVFA, IGIYVGVTHAITASIAWGVLA, FSVKTLTFLGFIGVLLAINLF, TVGKAFALSAFIVGGLWIITT, FSSMALATIVALYAFTGFESI, IAIFSVGAIYLLTLTVAMLLG, IIVVGALISMFGINVAASFGA, LAVIARFVQFIIVPIALIALA, AFTDKVLPLVAIVVSVGLAVS, and YFSIALIVITFIVVPAMAYLH.

The protein belongs to the amino acid-polyamine-organocation (APC) superfamily.

It localises to the cell membrane. Its function is as follows. Probable amino-acid or metabolite transport protein. This is an uncharacterized protein from Mycobacterium bovis (strain ATCC BAA-935 / AF2122/97).